Here is a 414-residue protein sequence, read N- to C-terminus: GA-binding protein subunit beta-2 (414 aa).

ANK repeat units follow at residues aspartate 5–threonine 34, leucine 37–alanine 66, valine 70–alanine 99, leucine 103–alanine 132, and phenylalanine 136–threonine 166. Phosphoserine is present on serine 218. Residues glutamate 310–asparagine 362 are a coiled coil.

Heterotetramer of two alpha and two beta subunits. The C-terminal is necessary for the formation of a heterotetrameric GABP-alpha-2/beta-2 complex, and also facilitates homotypic dimerization. Interacts with ADGRB2. High levels in thymus, spleen, kidney and intestine.

The protein localises to the nucleus. Transcription factor capable of interacting with purine rich repeats (GA repeats). Must associate with GABP-alpha to bind DNA. This chain is GA-binding protein subunit beta-2 (Gabpb2), found in Mus musculus (Mouse).